Consider the following 713-residue polypeptide: MRKSLSLFSIFILIFLGLVIPFITLTAFRPLNEEQYTLKQESSTGKGINETDFINTMFLRSSFFENWSETNYFINPTLKTSKNLLFNDKWYLDFLQDSYSTGVVYDKPNEVFLNYYQQWHSLKNRYMVEKFYDVKKENFLNDLIDFIYAFAVKYKMFNVSKEIVKNVDRYKENHYPRVKLNQDNWKLIDDIENVDKYKWEDETYIGITKIWKNKEWNWIIEDWKLHPPFSNVYLSSYKAIYRWTGVGKPQLPTIDKNTGEITDWNSYQQTRVKEFIDLSLYSVLLENTRVQQGGSADYENPNKVGTKRIIFDFETVDELDVKNIKKAIYRMILTVDEANLIISGSLELNNINNDDLSFNFSFMRTGMGEVFNFNGSIYSSLNSKDLKYYQQFSGQFDLSKFLQSFFASALVPVFQNRSSFIENGYIDNLQYDTVLVNFFALKLQNFNNILLSENINDKLQFDKLLNSMFKISQKFYTNYLRTIFDLENNTYVQGYNKKYGLLVNNGFKIYPRYFYFSDKYKQLDIKLYSAFKNRFYTINNYGSVFNYDFSVANNYNISLNSGYVFGGDLQNKYGLQYKKIEEQKIGYNVFELQAQKENDMYRYYDFNFGIYNWQEINNGGLFPDKQWWQVQYITPKGWWDFGAHIKNAVIWIVNTIPGVKQVNELASGVGKVFETVYSFFSQIFEVWKFNPALYSTITNIFLLIIFMKFVRLI.

Residues 686 to 706 (VWKFNPALYSTITNIFLLIIF) form a helical membrane-spanning segment.

Belongs to the plectrovirus ORF1 family.

It is found in the host membrane. This is an uncharacterized protein from Spiroplasma melliferum (SpV1).